Consider the following 563-residue polypeptide: Protein NRT1/ PTR FAMILY 5.9 (563 aa).

Residues 56–76 (TWAGFTSMLPLFSAPLADTYW) form a helical membrane-spanning segment. A Phosphothreonine modification is found at Thr81. 10 consecutive transmembrane segments (helical) span residues 82 to 102 (ILAS…TAFA), 110 to 130 (TISS…LGVL), 168 to 188 (FFQL…TVMA), 194 to 214 (FGWV…ILVF), 317 to 337 (FPIW…ATFF), 362 to 382 (TITL…IPIT), 394 to 414 (VMER…IAAI), 441 to 461 (IFWL…TVVG), 479 to 499 (FALY…LISI), and 528 to 548 (WLLA…CKFF).

This sequence belongs to the major facilitator superfamily. Proton-dependent oligopeptide transporter (POT/PTR) (TC 2.A.17) family. Expressed in roots and flowers.

Its subcellular location is the membrane. The polypeptide is Protein NRT1/ PTR FAMILY 5.9 (NPF5.9) (Arabidopsis thaliana (Mouse-ear cress)).